The primary structure comprises 83 residues: Small ribosomal subunit protein eS21 (83 aa).

Belongs to the eukaryotic ribosomal protein eS21 family. As to quaternary structure, component of the 40S small ribosomal subunit.

It localises to the cytoplasm. It is found in the cytosol. Its subcellular location is the rough endoplasmic reticulum. The protein is Small ribosomal subunit protein eS21 (RpS21) of Agriotes lineatus (Lined click beetle).